A 760-amino-acid chain; its full sequence is Xaa-Pro dipeptidyl-peptidase (760 aa).

Active-site charge relay system residues include Ser-349, Asp-469, and His-499.

The protein belongs to the peptidase S15 family. In terms of assembly, homodimer.

The protein resides in the cytoplasm. It catalyses the reaction Hydrolyzes Xaa-Pro-|- bonds to release unblocked, N-terminal dipeptides from substrates including Ala-Pro-|-p-nitroanilide and (sequentially) Tyr-Pro-|-Phe-Pro-|-Gly-Pro-|-Ile.. In terms of biological role, removes N-terminal dipeptides sequentially from polypeptides having unsubstituted N-termini provided that the penultimate residue is proline. The sequence is that of Xaa-Pro dipeptidyl-peptidase from Streptococcus pyogenes serotype M3 (strain ATCC BAA-595 / MGAS315).